A 154-amino-acid chain; its full sequence is Iron-sulfur cluster assembly enzyme IscU (154 aa).

Belongs to the NifU family. As to quaternary structure, component of the mitochondrial core iron-sulfur cluster (ISC) assembly complex at least composed of the cystein desulfurase Nfs1, the scaffold protein IscU, the accessory protein bcn92/Isd11/Lyrm4, and probably fh/frataxin. Interacts with Nfs1. Fe(2+) is required as a cofactor. Requires [2Fe-2S] cluster as cofactor.

It participates in cofactor biosynthesis; iron-sulfur cluster biosynthesis. Functionally, scaffold protein for the de novo synthesis of iron-sulfur (Fe-S) clusters within mitochondria, which is required for maturation of both mitochondrial and cytoplasmic [2Fe-2S] and [4Fe-4S] proteins. Component of the mitochondrial core iron-sulfur cluster (ISC) assembly complex; regulates its activity. This Drosophila melanogaster (Fruit fly) protein is Iron-sulfur cluster assembly enzyme IscU.